A 77-amino-acid polypeptide reads, in one-letter code: Secapin (77 aa).

Residues 1-32 (MKNYSKNATHLITVLLFSFVVILLIIPSKCEA) form the signal peptide. Residues 33–52 (VSNDMQPLEARSADLIPEPR) constitute a propeptide that is removed on maturation. A disulfide bond links Cys-61 and Cys-72.

The protein belongs to the secapin family. As to expression, expressed by the venom gland.

The protein resides in the secreted. Functionally, nontoxic peptide. The chain is Secapin from Vespa velutina nigrithorax (Hornet).